The following is a 231-amino-acid chain: Antiholin-like protein LrgB (231 aa).

5 helical membrane-spanning segments follow: residues 7 to 24, 34 to 56, 91 to 113, 149 to 171, and 207 to 229; these read PYFGIVVSLAAFGIGTFL, FTPLFVAMVLGIAFLKIGGFSYA, WWQIMASIIAGSICSVTIVYLLA, ITAFAVIFNAVIVYALGALFLKV, and ASIAVVVVGVVTVLVIPVFVQLI.

The protein belongs to the CidB/LrgB family. LrgB subfamily.

The protein resides in the cell membrane. Its function is as follows. Inhibits the expression or activity of extracellular murein hydrolases by interacting, possibly with LrgA, with the holin-like protein CidA. The LrgAB and CidA proteins may affect the proton motive force of the membrane. May be involved in programmed cell death (PCD), possibly triggering PCD in response to antibiotics and environmental stresses. The protein is Antiholin-like protein LrgB of Bacillus subtilis (strain 168).